The primary structure comprises 487 residues: Serine/threonine-protein kinase 4 (487 aa).

N-acetylmethionine is present on Met-1. Thr-3 bears the Phosphothreonine mark. A Protein kinase domain is found at 30 to 281 (FDVLEKLGEG…ATQLLQHPFV (252 aa)). ATP is bound by residues 36 to 44 (LGEGSYGSV) and Lys-59. The active-site Proton acceptor is Asp-149. Thr-183 carries the post-translational modification Phosphothreonine; by autocatalysis. Ser-265 bears the Phosphoserine mark. A coiled-coil region spans residues 290 to 310 (LRDLINEAMDVKLKRQEAQQR). A disordered region spans residues 305–338 (QEAQQREVDQDDEENSEEDELDSGTMVRAVGDDM). The span at 313-326 (DQDDEENSEEDELD) shows a compositional bias: acidic residues. At Ser-320 the chain carries Phosphoserine. 2 positions are modified to phosphothreonine: Thr-340 and Thr-367. The residue at position 387 (Thr-387) is a Phosphothreonine; by PKB/AKT1. Residues Ser-410 and Ser-414 each carry the phosphoserine modification. Tyr-433 is subject to Phosphotyrosine. An SARAH domain is found at 433–480 (YEFLKSWTVEDLQKRLLALDPMMEQEIEEIRQKYQSKRQPILDAIEAK).

It belongs to the protein kinase superfamily. STE Ser/Thr protein kinase family. STE20 subfamily. Homodimer; mediated via the coiled-coil region. Interacts with NORE1, which inhibits autoactivation. Interacts with and stabilizes SAV1. Interacts with RASSF1. Interacts with FOXO3. Interacts with RASSF2 (via SARAH domain). Interacts with AR, PKB/AKT1, TNNI3 and SIRT1. Interacts with DLG5 (via PDZ domain 3). Interacts with MARK3 and SCRIB in the presence of DLG5. Mg(2+) is required as a cofactor. In terms of processing, autophosphorylated on serine and threonine residues. Phosphorylation at Thr-387 by PKB/AKT1, leads to inhibition of its: kinase activity, nuclear translocation and autophosphorylation at Thr-183. It also diminishes its cleavage by caspases and its ability to phosphorylate FOXO3. Proteolytically cleaved by caspase-3 during apoptosis at Asp-326 and Asp-349 resulting in a 37 kDa or a 39 kDa subunit respectively. The 39 kDa subunit is further cleaved into the 37 kDa form. Proteolytic cleavage results in kinase activation and nuclear translocation of the truncated form (MST1/N). It is less likely that cleavage at Asp-349 is a prerequisite for activation as this site is not conserved in the murine ortholog.

Its subcellular location is the cytoplasm. The protein resides in the nucleus. The enzyme catalyses L-seryl-[protein] + ATP = O-phospho-L-seryl-[protein] + ADP + H(+). It catalyses the reaction L-threonyl-[protein] + ATP = O-phospho-L-threonyl-[protein] + ADP + H(+). With respect to regulation, inhibited by the C-terminal non-catalytic region. Activated by caspase-cleavage. Full activation also requires homodimerization and autophosphorylation of Thr-183. Activated by RASSF1 which acts by preventing its dephosphorylation. Its function is as follows. Stress-activated, pro-apoptotic kinase which, following caspase-cleavage, enters the nucleus and induces chromatin condensation followed by internucleosomal DNA fragmentation. Key component of the Hippo signaling pathway which plays a pivotal role in organ size control and tumor suppression by restricting proliferation and promoting apoptosis. The core of this pathway is composed of a kinase cascade wherein STK3/MST2 and STK4/MST1, in complex with its regulatory protein SAV1, phosphorylates and activates LATS1/2 in complex with its regulatory protein MOB1, which in turn phosphorylates and inactivates YAP1 oncoprotein and WWTR1/TAZ. Phosphorylation of YAP1 by LATS2 inhibits its translocation into the nucleus to regulate cellular genes important for cell proliferation, cell death, and cell migration. STK3/MST2 and STK4/MST1 are required to repress proliferation of mature hepatocytes, to prevent activation of facultative adult liver stem cells (oval cells), and to inhibit tumor formation. Phosphorylates 'Ser-14' of histone H2B (H2BS14ph) during apoptosis. Phosphorylates FOXO3 upon oxidative stress, which results in its nuclear translocation and cell death initiation. Phosphorylates MOBKL1A, MOBKL1B and RASSF2. Phosphorylates TNNI3 (cardiac Tn-I) and alters its binding affinity to TNNC1 (cardiac Tn-C) and TNNT2 (cardiac Tn-T). Phosphorylates FOXO1 on 'Ser-212' and regulates its activation and stimulates transcription of PMAIP1 in a FOXO1-dependent manner. Phosphorylates SIRT1 and inhibits SIRT1-mediated p53/TP53 deacetylation, thereby promoting p53/TP53 dependent transcription and apoptosis upon DNA damage. Acts as an inhibitor of PKB/AKT1. Phosphorylates AR on 'Ser-650' and suppresses its activity by intersecting with PKB/AKT1 signaling and antagonizing formation of AR-chromatin complexes. The protein is Serine/threonine-protein kinase 4 (STK4) of Lemur catta (Ring-tailed lemur).